Consider the following 374-residue polypeptide: tRNA-specific 2-thiouridylase MnmA (374 aa).

ATP contacts are provided by residues G12–S19 and M38. The tract at residues N98 to D100 is interaction with target base in tRNA. C103 acts as the Nucleophile in catalysis. A disulfide bridge links C103 with C207. G128 provides a ligand contact to ATP. The interaction with tRNA stretch occupies residues K157–Q159. C207 functions as the Cysteine persulfide intermediate in the catalytic mechanism. The interval R321–Y322 is interaction with tRNA.

Belongs to the MnmA/TRMU family.

The protein resides in the cytoplasm. It carries out the reaction S-sulfanyl-L-cysteinyl-[protein] + uridine(34) in tRNA + AH2 + ATP = 2-thiouridine(34) in tRNA + L-cysteinyl-[protein] + A + AMP + diphosphate + H(+). Its function is as follows. Catalyzes the 2-thiolation of uridine at the wobble position (U34) of tRNA, leading to the formation of s(2)U34. In Aliivibrio fischeri (strain MJ11) (Vibrio fischeri), this protein is tRNA-specific 2-thiouridylase MnmA.